The primary structure comprises 481 residues: Glutamate-1-semialdehyde 2,1-aminomutase, chloroplastic (481 aa).

The tract at residues 18–40 (NQTPKWGFSPSHRRCNPSSSSSA) is disordered. Lys321 carries the post-translational modification N6-(pyridoxal phosphate)lysine.

This sequence belongs to the class-III pyridoxal-phosphate-dependent aminotransferase family. HemL subfamily. As to quaternary structure, homodimer. It depends on pyridoxal 5'-phosphate as a cofactor.

The protein localises to the plastid. It is found in the chloroplast. The enzyme catalyses (S)-4-amino-5-oxopentanoate = 5-aminolevulinate. Its pathway is porphyrin-containing compound metabolism; protoporphyrin-IX biosynthesis; 5-aminolevulinate from L-glutamyl-tRNA(Glu): step 2/2. The protein operates within porphyrin-containing compound metabolism; chlorophyll biosynthesis. The protein is Glutamate-1-semialdehyde 2,1-aminomutase, chloroplastic of Solanum lycopersicum (Tomato).